Consider the following 74-residue polypeptide: UPF0154 protein OB1676 (74 aa).

A helical transmembrane segment spans residues Ile-4–Ile-24.

Belongs to the UPF0154 family.

It is found in the membrane. In Oceanobacillus iheyensis (strain DSM 14371 / CIP 107618 / JCM 11309 / KCTC 3954 / HTE831), this protein is UPF0154 protein OB1676.